The chain runs to 161 residues: SsrA-binding protein (161 aa).

The disordered stretch occupies residues 138–161; it reads DKRTDSKEKDWNRDKARIMKSSLR. Basic and acidic residues predominate over residues 139–154; sequence KRTDSKEKDWNRDKAR.

It belongs to the SmpB family.

The protein localises to the cytoplasm. Required for rescue of stalled ribosomes mediated by trans-translation. Binds to transfer-messenger RNA (tmRNA), required for stable association of tmRNA with ribosomes. tmRNA and SmpB together mimic tRNA shape, replacing the anticodon stem-loop with SmpB. tmRNA is encoded by the ssrA gene; the 2 termini fold to resemble tRNA(Ala) and it encodes a 'tag peptide', a short internal open reading frame. During trans-translation Ala-aminoacylated tmRNA acts like a tRNA, entering the A-site of stalled ribosomes, displacing the stalled mRNA. The ribosome then switches to translate the ORF on the tmRNA; the nascent peptide is terminated with the 'tag peptide' encoded by the tmRNA and targeted for degradation. The ribosome is freed to recommence translation, which seems to be the essential function of trans-translation. This Aliivibrio fischeri (strain MJ11) (Vibrio fischeri) protein is SsrA-binding protein.